We begin with the raw amino-acid sequence, 108 residues long: uncharacterized protein (108 aa).

This is an uncharacterized protein from Acidianus sp. F28 (AFV-2).